A 220-amino-acid polypeptide reads, in one-letter code: ATP phosphoribosyltransferase (220 aa).

Belongs to the ATP phosphoribosyltransferase family. Short subfamily. In terms of assembly, heteromultimer composed of HisG and HisZ subunits.

Its subcellular location is the cytoplasm. The enzyme catalyses 1-(5-phospho-beta-D-ribosyl)-ATP + diphosphate = 5-phospho-alpha-D-ribose 1-diphosphate + ATP. Its pathway is amino-acid biosynthesis; L-histidine biosynthesis; L-histidine from 5-phospho-alpha-D-ribose 1-diphosphate: step 1/9. Its function is as follows. Catalyzes the condensation of ATP and 5-phosphoribose 1-diphosphate to form N'-(5'-phosphoribosyl)-ATP (PR-ATP). Has a crucial role in the pathway because the rate of histidine biosynthesis seems to be controlled primarily by regulation of HisG enzymatic activity. This chain is ATP phosphoribosyltransferase, found in Prochlorococcus marinus (strain NATL1A).